The sequence spans 844 residues: MEVELTNIQKATSSDYWSLASNQYPCGKFPKVSVGVTIPRTSSVSRGRDAASTAAFEKNLSQGTDGRSRPPKMDNASLQVSPEAANHGGSAKEVPKPVPAKVSVSQPDDNAIEQTGTFSFGTRREQDSHLDQLDRPPLVSSQGKRQVESADKNKPNSEMLRMKLWEILGGTSQNKEAVASPNPEDIETPCQPKSQIANGPSSGRQKVFTSPVPYNIKTPAQFNSQTANKPSSDPIESDSDSPQVVEVRPITRSLGRKKEPTGSTHQDKSGSAKKPLSTHRSTPKQKILDNVFAFNDKCTPKTVGKSANGESGSLRNLRSLSRRAKVEPKKAHCSDRISHKTTQDDMERKVPSKYIPSEKKGEKTNSFSSLSRTGKTAESCSRSPKRERRVNTMANVGARKMQLSENLLVKTLNDGEHKLSSPQLTSFKSKGKCSSISPQQKENDNTHIPEASDRTAARNSFNSTPSPAANPSPVLRKYSWEHDENPAINGKSGQKDASPLADRFSDMPDDFASPTFAANIKISPHRSKMLDDDLFSSKYPKGVNRSRSTSFTSDPESEPLDKMEKTNELPGSESPNSQEERQNRKQPHLSPLSPIESEGAQISIPSFRKGYKSHKWLSDVDSPDKSSIEHLGRKSHLKEGRKGKRQLTSPTHFATSGTQETMSDKEPEKVPENYLTRAFDQLVVVLGRFQTKIKSETRNKSSKILAATGEIIRQHLEGVEGQMQADVDKLVNAGKSKRKRLESTFEEQQEKLRILHEKFKEEVNQQLLGCKNSVEDFEAYHAELKGVADKQKASHKKLLQNAEKTVGAQLSDAETKIAEVQKRARKRMKGLKFVLKELIAETAE.

Disordered regions lie at residues 41-389, 418-506, 532-604, and 616-669; these read TSSV…RERR, KLSS…RFSD, DDLF…QISI, and WLSD…EPEK. Positions 106-120 are enriched in polar residues; that stretch reads QPDDNAIEQTGTFSF. Composition is skewed to basic and acidic residues over residues 122–134 and 145–164; these read TRRE…DQLD and RQVE…RMKL. Polar residues-rich tracts occupy residues 191 to 208 and 218 to 229; these read QPKS…QKVF and TPAQFNSQTANK. Composition is skewed to basic and acidic residues over residues 256–270 and 324–363; these read RKKE…DKSG and AKVE…KGEK. Polar residues-rich tracts occupy residues 364–382 and 420–440; these read TNSF…SCSR and SSPQ…SPQQ. The segment covering 441 to 456 has biased composition (basic and acidic residues); sequence KENDNTHIPEASDRTA. Residues 459-473 show a composition bias toward low complexity; it reads NSFNSTPSPAANPSP. The span at 545 to 554 shows a compositional bias: polar residues; that stretch reads RSRSTSFTSD. Basic and acidic residues predominate over residues 616 to 640; it reads WLSDVDSPDKSSIEHLGRKSHLKEG. The span at 646–661 shows a compositional bias: polar residues; the sequence is QLTSPTHFATSGTQET. Residues 731–765 are a coiled coil; that stretch reads VNAGKSKRKRLESTFEEQQEKLRILHEKFKEEVNQ.

In terms of tissue distribution, expressed in pollen mother cells and the ovule tissues during meiosis.

Its subcellular location is the chromosome. The protein resides in the nucleus. Its function is as follows. Plays a crucial role in homologous chromosome pairing and synapsis in meiosis. Does not seem required for cytokinesis. Is essential for meiotic bouquet formation, homologous chromosome pairing and normal recombination, and synaptonemal complex (SC) assembly. Required for the proper association of PAIR2 with chromosomes. This Oryza sativa subsp. japonica (Rice) protein is Meiosis-specific protein PAIR3.